The following is a 294-amino-acid chain: Ethylene-inducing xylanase 3 (294 aa).

Positions Met1–Ala19 are cleaved as a signal peptide. Residues Gln31–Ala226 form the GH11 domain. The Nucleophile role is filled by Glu122. Glu213 serves as the catalytic Proton donor. One can recognise a CBM1 domain in the interval Ser259 to Leu294.

Belongs to the glycosyl hydrolase 11 (cellulase G) family.

It catalyses the reaction Endohydrolysis of (1-&gt;4)-beta-D-xylosidic linkages in xylans.. It functions in the pathway glycan degradation; xylan degradation. Functionally, endo-1,4-beta-xylanase involved in the hydrolysis of xylan, a major structural heterogeneous polysaccharide found in plant biomass representing the second most abundant polysaccharide in the biosphere, after cellulose. Exhibits immunity-inducing activity in Nicotiana benthamiana. Can induce strong oxidative burst, activate the expression of defense-related genes, and increase resistance against oomycete and fungal pathogens in N.benthamiana. In Verticillium dahliae (strain VdLs.17 / ATCC MYA-4575 / FGSC 10137) (Verticillium wilt), this protein is Ethylene-inducing xylanase 3.